A 394-amino-acid chain; its full sequence is Flap endonuclease 1-A (394 aa).

The tract at residues 1–105 (MGIKGLTGLL…GVLSKRLERR (105 aa)) is N-domain. D34 serves as a coordination point for Mg(2+). The DNA site is built by R47 and R71. Residues D87, E159, E161, D180, and D182 each coordinate Mg(2+). Residues 123–254 (DVDRFSRRTV…KSALKLIREY (132 aa)) form an I-domain region. E159 is a binding site for DNA. G232 and D234 together coordinate DNA. D234 is a Mg(2+) binding site. Residues 341–349 (QQGRLDGFF) form an interaction with PCNA region. A disordered region spans residues 356 to 375 (KAAAPAPVGKAKGKGKVDAK).

This sequence belongs to the XPG/RAD2 endonuclease family. FEN1 subfamily. Interacts with PCNA. Three molecules of FEN1 bind to one PCNA trimer with each molecule binding to one PCNA monomer. PCNA stimulates the nuclease activity without altering cleavage specificity. Requires Mg(2+) as cofactor. In terms of processing, phosphorylated. Phosphorylation upon DNA damage induces relocalization to the nuclear plasma.

The protein localises to the nucleus. The protein resides in the nucleolus. It localises to the nucleoplasm. Its subcellular location is the mitochondrion. In terms of biological role, structure-specific nuclease with 5'-flap endonuclease and 5'-3' exonuclease activities involved in DNA replication and repair. During DNA replication, cleaves the 5'-overhanging flap structure that is generated by displacement synthesis when DNA polymerase encounters the 5'-end of a downstream Okazaki fragment. It enters the flap from the 5'-end and then tracks to cleave the flap base, leaving a nick for ligation. Also involved in the long patch base excision repair (LP-BER) pathway, by cleaving within the apurinic/apyrimidinic (AP) site-terminated flap. Acts as a genome stabilization factor that prevents flaps from equilibrating into structures that lead to duplications and deletions. Also possesses 5'-3' exonuclease activity on nicked or gapped double-stranded DNA, and exhibits RNase H activity. Also involved in replication and repair of rDNA and in repairing mitochondrial DNA. The protein is Flap endonuclease 1-A of Laccaria bicolor (strain S238N-H82 / ATCC MYA-4686) (Bicoloured deceiver).